A 320-amino-acid chain; its full sequence is Cytochrome f (320 aa).

The first 35 residues, 1–35 (MENRNTFSWVKEQITRSISVSIMIYVITRTSISNA), serve as a signal peptide directing secretion. Residues tyrosine 36, cysteine 56, cysteine 59, and histidine 60 each contribute to the heme site. A helical membrane pass occupies residues 286-305 (VQGLLFFFASVILAQVFLVL).

The protein belongs to the cytochrome f family. As to quaternary structure, the 4 large subunits of the cytochrome b6-f complex are cytochrome b6, subunit IV (17 kDa polypeptide, petD), cytochrome f and the Rieske protein, while the 4 small subunits are PetG, PetL, PetM and PetN. The complex functions as a dimer. Heme is required as a cofactor.

The protein localises to the plastid. It is found in the chloroplast thylakoid membrane. In terms of biological role, component of the cytochrome b6-f complex, which mediates electron transfer between photosystem II (PSII) and photosystem I (PSI), cyclic electron flow around PSI, and state transitions. This chain is Cytochrome f (petA), found in Triticum aestivum (Wheat).